We begin with the raw amino-acid sequence, 170 residues long: NADH-quinone oxidoreductase subunit B (170 aa).

[4Fe-4S] cluster contacts are provided by cysteine 37, cysteine 38, cysteine 102, and cysteine 131.

It belongs to the complex I 20 kDa subunit family. As to quaternary structure, NDH-1 is composed of 14 different subunits. Subunits NuoB, C, D, E, F, and G constitute the peripheral sector of the complex. Requires [4Fe-4S] cluster as cofactor.

It is found in the cell inner membrane. The catalysed reaction is a quinone + NADH + 5 H(+)(in) = a quinol + NAD(+) + 4 H(+)(out). Functionally, NDH-1 shuttles electrons from NADH, via FMN and iron-sulfur (Fe-S) centers, to quinones in the respiratory chain. The immediate electron acceptor for the enzyme in this species is believed to be ubiquinone. Couples the redox reaction to proton translocation (for every two electrons transferred, four hydrogen ions are translocated across the cytoplasmic membrane), and thus conserves the redox energy in a proton gradient. The protein is NADH-quinone oxidoreductase subunit B of Geotalea daltonii (strain DSM 22248 / JCM 15807 / FRC-32) (Geobacter daltonii).